The primary structure comprises 199 residues: Probable thymidylate kinase (199 aa).

9 to 16 contacts ATP; the sequence is GIDGCGKT.

Belongs to the thymidylate kinase family.

It catalyses the reaction dTMP + ATP = dTDP + ADP. This chain is Probable thymidylate kinase, found in Methanococcus maripaludis (strain C6 / ATCC BAA-1332).